A 127-amino-acid chain; its full sequence is uncharacterized protein (127 aa).

The next 2 helical transmembrane spans lie at 64 to 84 and 101 to 118; these read GYYI…FGYL and FFHF…AIYY.

The protein localises to the membrane. This is an uncharacterized protein from Saccharomyces cerevisiae (strain ATCC 204508 / S288c) (Baker's yeast).